A 535-amino-acid chain; its full sequence is CTP synthase (535 aa).

The tract at residues 1–267 (MTKFIFVTGG…DDIVIKRLDL (267 aa)) is amidoligase domain. Serine 13 provides a ligand contact to CTP. Serine 13 is a binding site for UTP. 14 to 19 (SLGKGI) is an ATP binding site. Tyrosine 54 serves as a coordination point for L-glutamine. Position 71 (aspartate 71) interacts with ATP. Residues aspartate 71 and glutamate 141 each coordinate Mg(2+). Residues 148-150 (DIE), 188-193 (KTKPTQ), and lysine 224 each bind CTP. UTP-binding positions include 188–193 (KTKPTQ) and lysine 224. 240 to 242 (RDA) contacts ATP. In terms of domain architecture, Glutamine amidotransferase type-1 spans 293-535 (TIGLVGKYVS…VEAAYKHQNK (243 aa)). Glycine 355 contacts L-glutamine. Cysteine 382 functions as the Nucleophile; for glutamine hydrolysis in the catalytic mechanism. L-glutamine contacts are provided by residues 383–386 (LGMQ), glutamate 406, and arginine 463. Active-site residues include histidine 508 and glutamate 510.

This sequence belongs to the CTP synthase family. In terms of assembly, homotetramer.

The catalysed reaction is UTP + L-glutamine + ATP + H2O = CTP + L-glutamate + ADP + phosphate + 2 H(+). It carries out the reaction L-glutamine + H2O = L-glutamate + NH4(+). The enzyme catalyses UTP + NH4(+) + ATP = CTP + ADP + phosphate + 2 H(+). Its pathway is pyrimidine metabolism; CTP biosynthesis via de novo pathway; CTP from UDP: step 2/2. With respect to regulation, allosterically activated by GTP, when glutamine is the substrate; GTP has no effect on the reaction when ammonia is the substrate. The allosteric effector GTP functions by stabilizing the protein conformation that binds the tetrahedral intermediate(s) formed during glutamine hydrolysis. Inhibited by the product CTP, via allosteric rather than competitive inhibition. Functionally, catalyzes the ATP-dependent amination of UTP to CTP with either L-glutamine or ammonia as the source of nitrogen. Regulates intracellular CTP levels through interactions with the four ribonucleotide triphosphates. This chain is CTP synthase, found in Staphylococcus haemolyticus (strain JCSC1435).